We begin with the raw amino-acid sequence, 402 residues long: Deoxyguanosinetriphosphate triphosphohydrolase-like protein (402 aa).

Residues 73–217 form the HD domain; that stretch reads RLTHTIEVAQ…AAIADDIAYN (145 aa).

This sequence belongs to the dGTPase family. Type 2 subfamily.

This is Deoxyguanosinetriphosphate triphosphohydrolase-like protein from Brucella suis (strain ATCC 23445 / NCTC 10510).